The following is a 317-amino-acid chain: Melanocyte-stimulating hormone receptor (317 aa).

The segment covering 1-20 has biased composition (polar residues); it reads MPVQGSQRSLLGAVNSTPTA. The disordered stretch occupies residues 1 to 23; it reads MPVQGSQRSLLGAVNSTPTATPH. The Extracellular portion of the chain corresponds to 1 to 37; sequence MPVQGSQRSLLGAVNSTPTATPHLRPAANQTGPQCLE. Asparagine 29 is a glycosylation site (N-linked (GlcNAc...) asparagine). The helical transmembrane segment at 38 to 63 threads the bilayer; the sequence is VSIPDGLFLCLGLVSLVENTLVVAAI. Residues 64 to 72 are Cytoplasmic-facing; that stretch reads AKNRNLHSP. Residues 73–93 form a helical membrane-spanning segment; sequence MYCFICCLALSDLLVSVSSVL. Over 94 to 118 the chain is Extracellular; the sequence is ETAVLLLLGAGALAAQATVVQQLGN. A helical membrane pass occupies residues 119-140; the sequence is VIDVLLCSSMVSSLFFLGAIAM. At 141 to 163 the chain is on the cytoplasmic side; that stretch reads DRYISIFYALRYHSIVTLARARR. A helical transmembrane segment spans residues 164–183; that stretch reads AIAAIWAASILSSTLFIAYC. Residues 184-191 are Extracellular-facing; it reads DRTAALLC. The chain crosses the membrane as a helical span at residues 192-211; the sequence is LVVFFLAMLVLMAVLYVHML. At 212 to 240 the chain is on the cytoplasmic side; that stretch reads TQARQHAQGIARLHKRQRPVQQGWGLKGA. A helical transmembrane segment spans residues 241-266; sequence ATLTILLGVFFLCWGPFFLHLTLIAV. Topologically, residues 267–279 are extracellular; sequence CPQHPTCSCIFKN. The chain crosses the membrane as a helical span at residues 280 to 300; sequence FRLFLALIVCNAIVDPLIYAF. The Cytoplasmic portion of the chain corresponds to 301 to 317; it reads RSQELRKTLKEVLLFFW.

It belongs to the G-protein coupled receptor 1 family. In terms of assembly, interacts with MGRN1, but does not undergo MGRN1-mediated ubiquitination; this interaction competes with GNAS-binding and thus inhibits agonist-induced cAMP production. Interacts with OPN3; the interaction results in a decrease in MC1R-mediated cAMP signaling and ultimately a decrease in melanin production in melanocytes.

The protein resides in the cell membrane. Its function is as follows. Receptor for MSH (alpha, beta and gamma) and ACTH. The activity of this receptor is mediated by G proteins which activate adenylate cyclase. Mediates melanogenesis, the production of eumelanin (black/brown) and phaeomelanin (red/yellow), via regulation of cAMP signaling in melanocytes. The sequence is that of Melanocyte-stimulating hormone receptor (MC1R) from Lemur catta (Ring-tailed lemur).